The sequence spans 258 residues: Indole-3-glycerol phosphate synthase 2 (258 aa).

This sequence belongs to the TrpC family.

The catalysed reaction is 1-(2-carboxyphenylamino)-1-deoxy-D-ribulose 5-phosphate + H(+) = (1S,2R)-1-C-(indol-3-yl)glycerol 3-phosphate + CO2 + H2O. The protein operates within amino-acid biosynthesis; L-tryptophan biosynthesis; L-tryptophan from chorismate: step 4/5. The function of the second trp operon in S.coelicolor is to produce tryptophan for the biosynthesis of calcium-dependent antibiotic (CDA). The chain is Indole-3-glycerol phosphate synthase 2 (trpC2) from Streptomyces coelicolor (strain ATCC BAA-471 / A3(2) / M145).